Consider the following 466-residue polypeptide: tRNA-2-methylthio-N(6)-dimethylallyladenosine synthase (466 aa).

One can recognise an MTTase N-terminal domain in the interval 5 to 125 (RKLHIKSYGC…LPELLARAGR (121 aa)). [4Fe-4S] cluster is bound by residues Cys-14, Cys-50, Cys-88, Cys-166, Cys-170, and Cys-173. In terms of domain architecture, Radical SAM core spans 152-384 (RARGVSAFVT…QSLIDSQQAA (233 aa)). The TRAM domain maps to 387–449 (KAAIGTVVDV…RYSLLGELVA (63 aa)).

It belongs to the methylthiotransferase family. MiaB subfamily. As to quaternary structure, monomer. The cofactor is [4Fe-4S] cluster.

The protein resides in the cytoplasm. The enzyme catalyses N(6)-dimethylallyladenosine(37) in tRNA + (sulfur carrier)-SH + AH2 + 2 S-adenosyl-L-methionine = 2-methylsulfanyl-N(6)-dimethylallyladenosine(37) in tRNA + (sulfur carrier)-H + 5'-deoxyadenosine + L-methionine + A + S-adenosyl-L-homocysteine + 2 H(+). In terms of biological role, catalyzes the methylthiolation of N6-(dimethylallyl)adenosine (i(6)A), leading to the formation of 2-methylthio-N6-(dimethylallyl)adenosine (ms(2)i(6)A) at position 37 in tRNAs that read codons beginning with uridine. This Bradyrhizobium sp. (strain BTAi1 / ATCC BAA-1182) protein is tRNA-2-methylthio-N(6)-dimethylallyladenosine synthase.